Reading from the N-terminus, the 269-residue chain is Protein OPG079 (269 aa).

The protein belongs to the orthopoxvirus OPG079 family. As to quaternary structure, homoomultimer (Potential). Interacts with the small subunit of ribonucleotide reductase. Interacts with host FAM111A; this interaction protomtes OPG079 degradation through autophagy.

It is found in the host cytoplasm. In terms of biological role, plays an essential role in viral DNA replication. Binds to ssDNA with high affinity and localizes to cytoplasmic factories where nascent viral genomes accumulate. May disrupt loops, hairpins and other secondary structures present on ssDNA to reduce and eliminate pausing of viral DNA polymerase at specific sites during elongation. This is Protein OPG079 (OPG079) from Bos taurus (Bovine).